The chain runs to 348 residues: Phosphate acyltransferase (348 aa).

This sequence belongs to the PlsX family. In terms of assembly, homodimer. Probably interacts with PlsY.

The protein localises to the cytoplasm. It carries out the reaction a fatty acyl-[ACP] + phosphate = an acyl phosphate + holo-[ACP]. Its pathway is lipid metabolism; phospholipid metabolism. Its function is as follows. Catalyzes the reversible formation of acyl-phosphate (acyl-PO(4)) from acyl-[acyl-carrier-protein] (acyl-ACP). This enzyme utilizes acyl-ACP as fatty acyl donor, but not acyl-CoA. This chain is Phosphate acyltransferase, found in Rhizobium leguminosarum bv. trifolii (strain WSM2304).